A 242-amino-acid chain; its full sequence is Ferritin, mitochondrial (242 aa).

The transit peptide at 1 to 49 (MLSCFRLLSRHISPSLASLRPVRCCFALPLRWAPGRPLDPRQIAPRRPL) directs the protein to the mitochondrion. Residues 47–58 (RPLAAAASSRDP) are compositionally biased toward low complexity. The segment at 47–71 (RPLAAAASSRDPTGPAAGPSRVRQN) is disordered. The Ferritin-like diiron domain occupies 70–219 (QNFHPDSEAA…DHVHNLVKMG (150 aa)). Residues glutamate 87, glutamate 122, histidine 125, glutamate 167, and glutamine 201 each coordinate Fe cation.

Belongs to the ferritin family. In terms of assembly, homooligomer of 24 subunits. The functional molecule is roughly spherical and contains a central cavity into which the polymeric mineral iron core is deposited. As to expression, detected in testis and erythroleukemia. Expression is very low or not detectable in brain, colon, heart, kidney, liver, lung, muscle, placental, spleen and small intestine.

It is found in the mitochondrion. The catalysed reaction is 4 Fe(2+) + O2 + 4 H(+) = 4 Fe(3+) + 2 H2O. In terms of biological role, catalyzes the oxidation of ferrous iron(II) to ferric iron(III) and stores iron in a soluble, non-toxic, readily available form. Important for iron homeostasis. Iron is taken up in the ferrous form and deposited as ferric hydroxides after oxidation. The sequence is that of Ferritin, mitochondrial from Homo sapiens (Human).